Consider the following 472-residue polypeptide: Calcitonin gene-related peptide type 1 receptor (472 aa).

The N-terminal stretch at 1 to 28 is a signal peptide; it reads MGLLLRSALFKYIIIVLIMLNLRGYVLA. At 29 to 149 the chain is on the extracellular side; sequence EQEQGSQIPL…FTHEKVKTAL (121 aa). Intrachain disulfides connect C58–C84, C75–C115, and C98–C137. 3 N-linked (GlcNAc...) asparagine glycosylation sites follow: N76, N128, and N133. The chain crosses the membrane as a helical span at residues 150 to 174; sequence NLYYLTIIGHGLSIASLLISLGIFF. Over 175-185 the chain is Cytoplasmic; sequence YFKNLSCQRIT. A helical membrane pass occupies residues 186–208; that stretch reads LHKNLFFSFVCNSIITIISLSAV. The Extracellular segment spans residues 209-219; it reads ANNQALVATNP. A helical membrane pass occupies residues 220 to 248; the sequence is VSCKISQFIHLYLMGCNYFWMLCEGIYLH. Topologically, residues 249–262 are cytoplasmic; it reads TLIVVAVFAEKQHL. Residues 263–283 form a helical membrane-spanning segment; it reads MWYYLLGWGFPLIPACIHAVA. Residues 284–299 lie on the Extracellular side of the membrane; that stretch reads RSLYYNDNCWISSETH. A helical membrane pass occupies residues 300–324; sequence LLYIIHGPICAALLVNLFFLLNIVR. Topologically, residues 325-339 are cytoplasmic; sequence VLITKLKVTHQAESN. The chain crosses the membrane as a helical span at residues 340-361; it reads LYMKAVRATLILVPLLGIEFVL. The Extracellular portion of the chain corresponds to 362–376; sequence FPWKPEGRIAEEIYD. Residues 377 to 397 form a helical membrane-spanning segment; sequence YVMHILMHYQGLLVATIFCFF. At 398–472 the chain is on the cytoplasmic side; the sequence is NGEVQAVLKR…VFFKTEKQYM (75 aa).

The protein belongs to the G-protein coupled receptor 2 family.

The protein localises to the cell membrane. May function as G protein-coupled receptor for calcitonin-gene-related peptides and adrenomedullin. Specificity may be modulated by accessory proteins. May activate cAMP-dependent pathway. The sequence is that of Calcitonin gene-related peptide type 1 receptor (calcrl) from Xenopus tropicalis (Western clawed frog).